Here is a 721-residue protein sequence, read N- to C-terminus: Ribonuclease R (721 aa).

Residues 249-587 (RRSIIDREII…VHRLLWMFIF (339 aa)) form the RNB domain. An S1 motif domain is found at 639–719 (GKEFIGVVTT…LTRKIDFELV (81 aa)).

This sequence belongs to the RNR ribonuclease family. RNase R subfamily.

The protein resides in the cytoplasm. It carries out the reaction Exonucleolytic cleavage in the 3'- to 5'-direction to yield nucleoside 5'-phosphates.. Functionally, 3'-5' exoribonuclease that releases 5'-nucleoside monophosphates and is involved in maturation of structured RNAs. This Ureaplasma parvum serovar 3 (strain ATCC 700970) protein is Ribonuclease R.